The following is a 200-amino-acid chain: Recombination protein RecR (200 aa).

The C4-type zinc finger occupies 57 to 72; that stretch reads CRQCRTLTEQELCPQC. Residues 80-175 enclose the Toprim domain; sequence TQLCVVEGPT…AATRIAHGVP (96 aa).

Belongs to the RecR family.

May play a role in DNA repair. It seems to be involved in an RecBC-independent recombinational process of DNA repair. It may act with RecF and RecO. The sequence is that of Recombination protein RecR from Pseudomonas putida (strain GB-1).